Consider the following 321-residue polypeptide: Basic peroxidase (321 aa).

Positions Met-1 to Ala-30 are cleaved as a signal peptide. Position 31 is a pyrrolidone carboxylic acid (Gln-31). Disulfide bonds link Cys-41–Cys-117, Cys-74–Cys-79, Cys-123–Cys-317, and Cys-202–Cys-228. The Proton acceptor role is filled by His-72. Ca(2+)-binding residues include Asp-73, Val-76, Gly-78, Asp-80, and Ser-82. Pro-165 serves as a coordination point for substrate. Position 195 (His-195) interacts with heme b. Position 196 (Thr-196) interacts with Ca(2+). Asn-211 and Asn-221 each carry an N-linked (GlcNAc...) asparagine glycan. 3 residues coordinate Ca(2+): Asp-241, Thr-244, and Asp-249.

Belongs to the peroxidase family. Classical plant (class III) peroxidase subfamily. Heme b serves as cofactor. It depends on Ca(2+) as a cofactor. N-glycosylated. As to expression, expressed in tracheary elements, roots, young and old hypocotyls, and stems in the partially glycosylated form and in roots and young hypocotyls in the fully glycosylated form. None of the isoforms is significantly expressed in leaves or cotyledons.

It localises to the secreted. It catalyses the reaction 2 a phenolic donor + H2O2 = 2 a phenolic radical donor + 2 H2O. In terms of biological role, removal of H(2)O(2), oxidation of toxic reductants, biosynthesis and degradation of lignin, suberization, auxin catabolism, response to environmental stresses such as wounding, pathogen attack and oxidative stress. These functions might be dependent on each isozyme/isoform in each plant tissue. Involved in the synthesis of highly polymerized lignins. The polypeptide is Basic peroxidase (POD1) (Zinnia elegans (Garden zinnia)).